Here is a 324-residue protein sequence, read N- to C-terminus: Methionyl-tRNA formyltransferase (324 aa).

Position 113 to 116 (113 to 116) interacts with (6S)-5,6,7,8-tetrahydrofolate; sequence SLLP.

The protein belongs to the Fmt family.

The catalysed reaction is L-methionyl-tRNA(fMet) + (6R)-10-formyltetrahydrofolate = N-formyl-L-methionyl-tRNA(fMet) + (6S)-5,6,7,8-tetrahydrofolate + H(+). Attaches a formyl group to the free amino group of methionyl-tRNA(fMet). The formyl group appears to play a dual role in the initiator identity of N-formylmethionyl-tRNA by promoting its recognition by IF2 and preventing the misappropriation of this tRNA by the elongation apparatus. The polypeptide is Methionyl-tRNA formyltransferase (Bacteroides fragilis (strain ATCC 25285 / DSM 2151 / CCUG 4856 / JCM 11019 / LMG 10263 / NCTC 9343 / Onslow / VPI 2553 / EN-2)).